The primary structure comprises 451 residues: Probable metal transport system membrane protein CT_069 (451 aa).

Transmembrane regions (helical) follow at residues 14–34 (SFLAVSLICMTTALWGTILLV), 38–58 (PLLSESLSHACYPGLLIGALL), 70–90 (WVIIFFGCLASVLGCLGISFL), 100–120 (SALCLVLVSFFGVGVILVSYV), 145–165 (TEAKLALIIFCLSAVVLWWWY), 192–212 (VLVFISLVIVSGVRSVGILLI), 233–253 (ILILSSIFGGICGALGCYFSV), and 269–289 (ILPTGPLVVFFAGVLVFLCLI). The disordered stretch occupies residues 432–451 (PDYDPHQREIPKRTRKSDGC). Residues 434 to 451 (YDPHQREIPKRTRKSDGC) are compositionally biased toward basic and acidic residues.

The protein belongs to the ABC-3 integral membrane protein family.

It localises to the cell inner membrane. In terms of biological role, part of an ATP-driven transport system CT_067/CT_068/CT_069/CT_070 for a metal. In Chlamydia trachomatis serovar D (strain ATCC VR-885 / DSM 19411 / UW-3/Cx), this protein is Probable metal transport system membrane protein CT_069.